We begin with the raw amino-acid sequence, 283 residues long: Phospholipase C (283 aa).

An N-terminal signal peptide occupies residues 1–24 (MKKKVLALAAAITVVAPLQSVAFA). Positions 25 to 38 (HENDGGSKIKIVHR) are excised as a propeptide. Trp-39, His-52, Asp-93, His-107, His-156, Asp-160, His-166, His-180, and Glu-184 together coordinate Zn(2+). The Zn-dependent PLC domain occupies 39 to 283 (WSAEDKHKEG…QLWFDTYGDR (245 aa)).

The protein belongs to the bacterial zinc-metallophospholipase C family. As to quaternary structure, monomer. Requires Zn(2+) as cofactor.

The enzyme catalyses a 1,2-diacyl-sn-glycero-3-phosphocholine + H2O = phosphocholine + a 1,2-diacyl-sn-glycerol + H(+). In terms of biological role, required, with sphingomyelinase, to effect target cell lysis (hemolysis). In Bacillus cereus, this protein is Phospholipase C (plc).